The primary structure comprises 319 residues: L-galactose dehydrogenase (319 aa).

The Proton donor role is filled by tyrosine 59. Residues 122-269 form the SIS domain; it reads HCHDIEFGSL…ANKEISSVLV (148 aa). Histidine 124 is a substrate binding site.

Belongs to the aldo/keto reductase family.

It catalyses the reaction L-galactose + NAD(+) = L-galactono-1,4-lactone + NADH + H(+). Catalyzes the oxidation of L-galactose to L-galactono-1,4-lactone in the presence of NAD(+). Uses NAD(+) as a hydrogen acceptor much more efficiently than NADP(+). This is L-galactose dehydrogenase (LGALDH) from Arabidopsis thaliana (Mouse-ear cress).